The primary structure comprises 335 residues: Holliday junction branch migration complex subunit RuvB (335 aa).

The tract at residues 4–184 (ADRLVSAEVL…FGIVQRLEFY (181 aa)) is large ATPase domain (RuvB-L). ATP is bound by residues isoleucine 23, arginine 24, glycine 65, lysine 68, threonine 69, threonine 70, 131-133 (EDY), arginine 174, tyrosine 184, and arginine 221. Threonine 69 provides a ligand contact to Mg(2+). The segment at 185–255 (NVDDLQSIVS…IATRALDMLS (71 aa)) is small ATPAse domain (RuvB-S). Positions 258–335 (AAGFDYLDRK…RHFGMVRNQE (78 aa)) are head domain (RuvB-H). 3 residues coordinate DNA: arginine 294, arginine 313, and arginine 318.

Belongs to the RuvB family. Homohexamer. Forms an RuvA(8)-RuvB(12)-Holliday junction (HJ) complex. HJ DNA is sandwiched between 2 RuvA tetramers; dsDNA enters through RuvA and exits via RuvB. An RuvB hexamer assembles on each DNA strand where it exits the tetramer. Each RuvB hexamer is contacted by two RuvA subunits (via domain III) on 2 adjacent RuvB subunits; this complex drives branch migration. In the full resolvosome a probable DNA-RuvA(4)-RuvB(12)-RuvC(2) complex forms which resolves the HJ.

It localises to the cytoplasm. The enzyme catalyses ATP + H2O = ADP + phosphate + H(+). In terms of biological role, the RuvA-RuvB-RuvC complex processes Holliday junction (HJ) DNA during genetic recombination and DNA repair, while the RuvA-RuvB complex plays an important role in the rescue of blocked DNA replication forks via replication fork reversal (RFR). RuvA specifically binds to HJ cruciform DNA, conferring on it an open structure. The RuvB hexamer acts as an ATP-dependent pump, pulling dsDNA into and through the RuvAB complex. RuvB forms 2 homohexamers on either side of HJ DNA bound by 1 or 2 RuvA tetramers; 4 subunits per hexamer contact DNA at a time. Coordinated motions by a converter formed by DNA-disengaged RuvB subunits stimulates ATP hydrolysis and nucleotide exchange. Immobilization of the converter enables RuvB to convert the ATP-contained energy into a lever motion, pulling 2 nucleotides of DNA out of the RuvA tetramer per ATP hydrolyzed, thus driving DNA branch migration. The RuvB motors rotate together with the DNA substrate, which together with the progressing nucleotide cycle form the mechanistic basis for DNA recombination by continuous HJ branch migration. Branch migration allows RuvC to scan DNA until it finds its consensus sequence, where it cleaves and resolves cruciform DNA. The polypeptide is Holliday junction branch migration complex subunit RuvB (Photorhabdus laumondii subsp. laumondii (strain DSM 15139 / CIP 105565 / TT01) (Photorhabdus luminescens subsp. laumondii)).